The sequence spans 302 residues: 4-hydroxy-tetrahydrodipicolinate synthase (302 aa).

T55 contributes to the pyruvate binding site. Y144 functions as the Proton donor/acceptor in the catalytic mechanism. K172 serves as the catalytic Schiff-base intermediate with substrate. Residue V214 coordinates pyruvate.

It belongs to the DapA family. In terms of assembly, homotetramer; dimer of dimers.

The protein resides in the cytoplasm. It catalyses the reaction L-aspartate 4-semialdehyde + pyruvate = (2S,4S)-4-hydroxy-2,3,4,5-tetrahydrodipicolinate + H2O + H(+). The protein operates within amino-acid biosynthesis; L-lysine biosynthesis via DAP pathway; (S)-tetrahydrodipicolinate from L-aspartate: step 3/4. Its function is as follows. Catalyzes the condensation of (S)-aspartate-beta-semialdehyde [(S)-ASA] and pyruvate to 4-hydroxy-tetrahydrodipicolinate (HTPA). This chain is 4-hydroxy-tetrahydrodipicolinate synthase, found in Prochlorococcus marinus (strain SARG / CCMP1375 / SS120).